A 730-amino-acid chain; its full sequence is Elongation factor 2 (730 aa).

The tr-type G domain maps to 19 to 228 (QRIRNIGIVA…TGVSFKDVYD (210 aa)). Residues 28-35 (AHIDHGKT), 94-98 (DTPGH), and 148-151 (NKVD) contribute to the GTP site. H596 bears the Diphthamide mark.

Belongs to the TRAFAC class translation factor GTPase superfamily. Classic translation factor GTPase family. EF-G/EF-2 subfamily.

The protein localises to the cytoplasm. Its function is as follows. Catalyzes the GTP-dependent ribosomal translocation step during translation elongation. During this step, the ribosome changes from the pre-translocational (PRE) to the post-translocational (POST) state as the newly formed A-site-bound peptidyl-tRNA and P-site-bound deacylated tRNA move to the P and E sites, respectively. Catalyzes the coordinated movement of the two tRNA molecules, the mRNA and conformational changes in the ribosome. The polypeptide is Elongation factor 2 (Methanosarcina acetivorans (strain ATCC 35395 / DSM 2834 / JCM 12185 / C2A)).